A 961-amino-acid polypeptide reads, in one-letter code: RNA polymerase II subunit A C-terminal domain phosphatase (961 aa).

Methionine 1 carries the N-acetylmethionine modification. Positions 178–344 (HRNRKLVLMV…SRESQTRKKV (167 aa)) constitute an FCP1 homology domain. The tract at residues 328–589 (DMNAPPGSRE…EEEDTDEDDH (262 aa)) is disordered. Basic and acidic residues predominate over residues 394–406 (DSPRPGKPDERDI). Residue serine 395 is modified to Phosphoserine. Over residues 450–462 (LDFDLSSDSESSS) the composition is skewed to acidic residues. A compositionally biased stretch (low complexity) spans 463–475 (ESEGTKSSSSASD). The segment covering 575–588 (SMEEEEEEDTDEDD) has biased composition (acidic residues). The BRCT domain maps to 629–728 (LKSKVLADVA…DKVEEQLFPL (100 aa)). Phosphoserine occurs at positions 674 and 740. Disordered stretches follow at residues 730 to 752 (DDHT…GVPP) and 780 to 949 (KLIR…ADEM). Lysine 780 is subject to N6-acetyllysine. Over residues 793 to 803 (SSSLPIRQEPS) the composition is skewed to polar residues. Serine 839 is subject to Phosphoserine. Residues 850–859 (CKEDLESMDK) are compositionally biased toward basic and acidic residues. Acidic residues-rich tracts occupy residues 860–873 (EVDD…DDSD) and 937–947 (NEDEGSSSEAD). A phosphoserine mark is found at serine 869 and serine 872.

As to quaternary structure, homodimer. Interacts with GTF2F1. Interacts with WDR77, SNRPB and SNRNP70. Phosphorylated. In the presence of TFIIF, the phosphorylated form has an increased CTD phosphatase activity. The phosphorylation is required for the physical interaction with GTF2F1. In terms of tissue distribution, ubiquitously expressed.

It is found in the nucleus. The protein localises to the cytoplasm. It localises to the cytoskeleton. The protein resides in the microtubule organizing center. Its subcellular location is the centrosome. It is found in the spindle pole. The protein localises to the midbody. The catalysed reaction is O-phospho-L-seryl-[protein] + H2O = L-seryl-[protein] + phosphate. It carries out the reaction O-phospho-L-threonyl-[protein] + H2O = L-threonyl-[protein] + phosphate. Functionally, processively dephosphorylates 'Ser-2' and 'Ser-5' of the heptad repeats YSPTSPS in the C-terminal domain of the largest RNA polymerase II subunit. This promotes the activity of RNA polymerase II. Plays a role in the exit from mitosis by dephosphorylating crucial mitotic substrates (USP44, CDC20 and WEE1) that are required for M-phase-promoting factor (MPF)/CDK1 inactivation. In Homo sapiens (Human), this protein is RNA polymerase II subunit A C-terminal domain phosphatase (CTDP1).